We begin with the raw amino-acid sequence, 467 residues long: Asparagine--tRNA ligase (467 aa).

Belongs to the class-II aminoacyl-tRNA synthetase family. As to quaternary structure, homodimer.

Its subcellular location is the cytoplasm. The enzyme catalyses tRNA(Asn) + L-asparagine + ATP = L-asparaginyl-tRNA(Asn) + AMP + diphosphate + H(+). This is Asparagine--tRNA ligase from Actinobacillus succinogenes (strain ATCC 55618 / DSM 22257 / CCUG 43843 / 130Z).